The chain runs to 178 residues: Inorganic pyrophosphatase (178 aa).

3 residues coordinate substrate: Lys31, Arg45, and Tyr57. Mg(2+) is bound by residues Asp67, Asp72, and Asp104. Tyr141 lines the substrate pocket.

This sequence belongs to the PPase family. As to quaternary structure, homohexamer. Mg(2+) is required as a cofactor.

Its subcellular location is the cytoplasm. It carries out the reaction diphosphate + H2O = 2 phosphate + H(+). In terms of biological role, catalyzes the hydrolysis of inorganic pyrophosphate (PPi) forming two phosphate ions. The chain is Inorganic pyrophosphatase from Leptospira interrogans serogroup Icterohaemorrhagiae serovar copenhageni (strain Fiocruz L1-130).